A 200-amino-acid polypeptide reads, in one-letter code: NADH-quinone oxidoreductase subunit C (200 aa).

It belongs to the complex I 30 kDa subunit family. NDH-1 is composed of 14 different subunits. Subunits NuoB, C, D, E, F, and G constitute the peripheral sector of the complex.

Its subcellular location is the cell inner membrane. It catalyses the reaction a quinone + NADH + 5 H(+)(in) = a quinol + NAD(+) + 4 H(+)(out). Its function is as follows. NDH-1 shuttles electrons from NADH, via FMN and iron-sulfur (Fe-S) centers, to quinones in the respiratory chain. The immediate electron acceptor for the enzyme in this species is believed to be ubiquinone. Couples the redox reaction to proton translocation (for every two electrons transferred, four hydrogen ions are translocated across the cytoplasmic membrane), and thus conserves the redox energy in a proton gradient. The protein is NADH-quinone oxidoreductase subunit C of Paraburkholderia xenovorans (strain LB400).